Here is a 429-residue protein sequence, read N- to C-terminus: D-amino acid dehydrogenase (429 aa).

3–17 (VLILGSGVIGTTTAW) provides a ligand contact to FAD.

The protein belongs to the DadA oxidoreductase family. FAD serves as cofactor.

It catalyses the reaction a D-alpha-amino acid + A + H2O = a 2-oxocarboxylate + AH2 + NH4(+). It functions in the pathway amino-acid degradation; D-alanine degradation; NH(3) and pyruvate from D-alanine: step 1/1. In terms of biological role, oxidative deamination of D-amino acids. The polypeptide is D-amino acid dehydrogenase (Xanthomonas campestris pv. campestris (strain B100)).